The primary structure comprises 338 residues: Ketol-acid reductoisomerase (NADP(+)) (338 aa).

The KARI N-terminal Rossmann domain occupies 1 to 181 (MKVFYDKDCD…GGGRAGIIET (181 aa)). NADP(+)-binding positions include 24–27 (YGSQ), R47, and S52. The active site involves H107. An NADP(+)-binding site is contributed by G133. Positions 182–327 (NFREETETDL…GKLRAMMPWI (146 aa)) constitute a KARI C-terminal knotted domain. 4 residues coordinate Mg(2+): D190, E194, E226, and E230. Residue S251 participates in substrate binding.

It belongs to the ketol-acid reductoisomerase family. The cofactor is Mg(2+).

The enzyme catalyses (2R)-2,3-dihydroxy-3-methylbutanoate + NADP(+) = (2S)-2-acetolactate + NADPH + H(+). It carries out the reaction (2R,3R)-2,3-dihydroxy-3-methylpentanoate + NADP(+) = (S)-2-ethyl-2-hydroxy-3-oxobutanoate + NADPH + H(+). It functions in the pathway amino-acid biosynthesis; L-isoleucine biosynthesis; L-isoleucine from 2-oxobutanoate: step 2/4. It participates in amino-acid biosynthesis; L-valine biosynthesis; L-valine from pyruvate: step 2/4. Functionally, involved in the biosynthesis of branched-chain amino acids (BCAA). Catalyzes an alkyl-migration followed by a ketol-acid reduction of (S)-2-acetolactate (S2AL) to yield (R)-2,3-dihydroxy-isovalerate. In the isomerase reaction, S2AL is rearranged via a Mg-dependent methyl migration to produce 3-hydroxy-3-methyl-2-ketobutyrate (HMKB). In the reductase reaction, this 2-ketoacid undergoes a metal-dependent reduction by NADPH to yield (R)-2,3-dihydroxy-isovalerate. This chain is Ketol-acid reductoisomerase (NADP(+)), found in Bordetella pertussis (strain Tohama I / ATCC BAA-589 / NCTC 13251).